The sequence spans 872 residues: F-box protein pof6 (872 aa).

Residues 30-75 (FGCLTINIYLKIFTLISTPDLCNCRLVCRKFQQLCDYNSIYVKKLL) enclose the F-box domain. The segment at 101–122 (MSSNTSKGFHLQSSDKKYADSD) is disordered. Residues 113 to 122 (SSDKKYADSD) show a composition bias toward basic and acidic residues.

Interacts with skp1. Forms a complex with pof6 and skp1.

It is found in the cytoplasm. It localises to the nucleus. Together with skp1, essential for septum processing and cell separation. This chain is F-box protein pof6 (pof6), found in Schizosaccharomyces pombe (strain 972 / ATCC 24843) (Fission yeast).